Reading from the N-terminus, the 445-residue chain is Ribosomal protein uS12 methylthiotransferase RimO (445 aa).

Residues 4 to 119 enclose the MTTase N-terminal domain; it reads IKVALVSLGC…LLESIKVFLK (116 aa). Cys-13, Cys-48, Cys-82, Cys-156, Cys-160, and Cys-163 together coordinate [4Fe-4S] cluster. Residues 142–372 enclose the Radical SAM core domain; sequence TTPTYTAYVR…MILQQSISKD (231 aa). Residues 375 to 441 enclose the TRAM domain; it reads KEKIGKIYEV…EYDLIGVVYN (67 aa).

It belongs to the methylthiotransferase family. RimO subfamily. [4Fe-4S] cluster serves as cofactor.

It is found in the cytoplasm. The enzyme catalyses L-aspartate(89)-[ribosomal protein uS12]-hydrogen + (sulfur carrier)-SH + AH2 + 2 S-adenosyl-L-methionine = 3-methylsulfanyl-L-aspartate(89)-[ribosomal protein uS12]-hydrogen + (sulfur carrier)-H + 5'-deoxyadenosine + L-methionine + A + S-adenosyl-L-homocysteine + 2 H(+). In terms of biological role, catalyzes the methylthiolation of an aspartic acid residue of ribosomal protein uS12. This chain is Ribosomal protein uS12 methylthiotransferase RimO, found in Clostridium botulinum (strain Langeland / NCTC 10281 / Type F).